A 390-amino-acid chain; its full sequence is GTPase Obg (390 aa).

The Obg domain maps to 1–159; sequence MKFVDEAAIL…RDILLELLLL (159 aa). Residues 160-333 enclose the OBG-type G domain; it reads ADVGMLGLPN…LCWDVMKFIN (174 aa). GTP is bound by residues 166–173, 191–195, 213–216, 283–286, and 314–316; these read GLPNAGKS, FTTLV, DIPG, NKID, and SAV. Mg(2+)-binding residues include S173 and T193. The segment covering 366–384 has biased composition (acidic residues); that stretch reads AEADDDWDDDWDEEDDEGV. A disordered region spans residues 366–390; that stretch reads AEADDDWDDDWDEEDDEGVEIIYQK.

The protein belongs to the TRAFAC class OBG-HflX-like GTPase superfamily. OBG GTPase family. In terms of assembly, monomer. It depends on Mg(2+) as a cofactor.

Its subcellular location is the cytoplasm. An essential GTPase which binds GTP, GDP and possibly (p)ppGpp with moderate affinity, with high nucleotide exchange rates and a fairly low GTP hydrolysis rate. Plays a role in control of the cell cycle, stress response, ribosome biogenesis and in those bacteria that undergo differentiation, in morphogenesis control. The protein is GTPase Obg of Serratia proteamaculans (strain 568).